An 813-amino-acid polypeptide reads, in one-letter code: Leucine--tRNA ligase (813 aa).

A 'HIGH' region motif is present at residues 42 to 52; it reads PYTSGNLHIGH. The 'KMSKS' region motif lies at 580–584; sequence KMSKS. An ATP-binding site is contributed by Lys583.

Belongs to the class-I aminoacyl-tRNA synthetase family.

The protein resides in the cytoplasm. It catalyses the reaction tRNA(Leu) + L-leucine + ATP = L-leucyl-tRNA(Leu) + AMP + diphosphate. The protein is Leucine--tRNA ligase of Dehalococcoides mccartyi (strain ATCC BAA-2100 / JCM 16839 / KCTC 5957 / BAV1).